Reading from the N-terminus, the 273-residue chain is Karrikin insensitive 2 receptor B (273 aa).

Serine 95 acts as the Nucleophile in catalysis. Residue aspartate 217 is part of the active site.

It belongs to the AB hydrolase superfamily. In terms of tissue distribution, expressed in stigma.

The protein resides in the nucleus. Its subcellular location is the cytoplasm. Its function is as follows. May be involved in plant olfaction during volatile communication. The sequence is that of Karrikin insensitive 2 receptor B from Petunia hybrida (Petunia).